The chain runs to 177 residues: Adenine phosphoribosyltransferase (177 aa).

It belongs to the purine/pyrimidine phosphoribosyltransferase family. Homodimer.

The protein resides in the cytoplasm. The enzyme catalyses AMP + diphosphate = 5-phospho-alpha-D-ribose 1-diphosphate + adenine. It participates in purine metabolism; AMP biosynthesis via salvage pathway; AMP from adenine: step 1/1. In terms of biological role, catalyzes a salvage reaction resulting in the formation of AMP, that is energically less costly than de novo synthesis. The polypeptide is Adenine phosphoribosyltransferase (Mycobacteroides abscessus (strain ATCC 19977 / DSM 44196 / CCUG 20993 / CIP 104536 / JCM 13569 / NCTC 13031 / TMC 1543 / L948) (Mycobacterium abscessus)).